A 525-amino-acid chain; its full sequence is GMP synthase [glutamine-hydrolyzing] (525 aa).

Residues 9–207 enclose the Glutamine amidotransferase type-1 domain; sequence RILILDFGSQ…VRDICQCEAL (199 aa). Cysteine 86 serves as the catalytic Nucleophile. Catalysis depends on residues histidine 181 and glutamate 183. Positions 208 to 400 constitute a GMPS ATP-PPase domain; it reads WTPAKIIDDA…LGLPYDMLYR (193 aa). Residue 235 to 241 coordinates ATP; sequence SGGVDSS.

As to quaternary structure, homodimer.

The catalysed reaction is XMP + L-glutamine + ATP + H2O = GMP + L-glutamate + AMP + diphosphate + 2 H(+). It functions in the pathway purine metabolism; GMP biosynthesis; GMP from XMP (L-Gln route): step 1/1. Its function is as follows. Catalyzes the synthesis of GMP from XMP. This Shigella dysenteriae serotype 1 (strain Sd197) protein is GMP synthase [glutamine-hydrolyzing].